We begin with the raw amino-acid sequence, 482 residues long: Probable 2-carboxy-D-arabinitol-1-phosphatase (482 aa).

A chloroplast-targeting transit peptide spans Met1–Ser34. Residue His55 is the Tele-phosphohistidine intermediate of the active site. Glu129 (proton donor/acceptor) is an active-site residue.

This sequence belongs to the phosphoglycerate mutase family.

The protein resides in the plastid. The protein localises to the chloroplast stroma. The catalysed reaction is 2-carboxy-D-arabinitol 1-phosphate + H2O = 2-carboxy-D-arabinitol + phosphate. Phosphoglycerate mutase-like protein lacking PGM activity, but having 2-carboxy-D-arabinitol 1-phosphate (CA1P) phosphatase activity. Prevents the accumulation of D-glycero-2,3-pentodiulose-1,5-bisphosphate (PDBP) a potent inhibitor of ribulose-1,5-bisphosphate carboxylase (RuBisCO). PDBP is produced during the oxidation of ribulose-1,5-bisphosphate, the substrate of RuBisCO. In Arabidopsis thaliana (Mouse-ear cress), this protein is Probable 2-carboxy-D-arabinitol-1-phosphatase.